The following is an 84-amino-acid chain: Anaphase-promoting complex subunit 11 (84 aa).

Zn(2+) is bound by residues C23, C26, C34, C37, C44, C51, H53, H56, H58, C59, C73, and C76. The RING-type zinc-finger motif lies at 34–77 (CPDCKVPGDDCPLVWGQCSHCFHMHCILKWLNAQQVQQHCPMCR).

It belongs to the RING-box family. As to quaternary structure, the mammalian APC/C is composed at least of 14 distinct subunits ANAPC1, ANAPC2, CDC27/APC3, ANAPC4, ANAPC5, CDC16/APC6, ANAPC7, CDC23/APC8, ANAPC10, ANAPC11, CDC26/APC12, ANAPC13, ANAPC15 and ANAPC16 that assemble into a complex of at least 19 chains with a combined molecular mass of around 1.2 MDa; APC/C interacts with FZR1 and FBXO5. Interacts with the cullin domain of ANAPC2. Interacts with UBE2D2. In terms of processing, auto-ubiquitinated.

The protein localises to the cytoplasm. It localises to the nucleus. The protein operates within protein modification; protein ubiquitination. Its function is as follows. Together with the cullin protein ANAPC2, constitutes the catalytic component of the anaphase promoting complex/cyclosome (APC/C), a cell cycle-regulated E3 ubiquitin ligase that controls progression through mitosis and the G1 phase of the cell cycle. The APC/C complex acts by mediating ubiquitination and subsequent degradation of target proteins: it mainly mediates the formation of 'Lys-11'-linked polyubiquitin chains and, to a lower extent, the formation of 'Lys-48'- and 'Lys-63'-linked polyubiquitin chains. The APC/C complex catalyzes assembly of branched 'Lys-11'-/'Lys-48'-linked branched ubiquitin chains on target proteins. May recruit the E2 ubiquitin-conjugating enzymes to the complex. The chain is Anaphase-promoting complex subunit 11 (Anapc11) from Mus musculus (Mouse).